We begin with the raw amino-acid sequence, 2556 residues long: Ubiquitin carboxyl-terminal hydrolase 9Y (2556 aa).

The span at 1–33 (MTITTRGSPVGENESQGQTSDGQPQPSFQQNQI) shows a compositional bias: polar residues. The interval 1-68 (MTITTRGSPV…QHEEEDPSFP (68 aa)) is disordered. Over residues 34–44 (SSSDSSNETSP) the composition is skewed to low complexity. Ser-587 is modified (phosphoserine). Thr-589 is modified (phosphothreonine). Residues 971-999 (NMPSSPDSSSDSSAGPPGNHSHNNYRDVS) form a disordered region. Residues 973 to 983 (PSSPDSSSDSS) are compositionally biased toward low complexity. The 400-residue stretch at 1559–1958 (VGLKNAGATC…NAYILFYERM (400 aa)) folds into the USP domain. Residue Cys-1568 is the Nucleophile of the active site. Cys-1729, His-1731, Cys-1773, and Cys-1776 together coordinate Zn(2+). Residue His-1881 is the Proton acceptor of the active site. Position 2447 is a phosphoserine (Ser-2447). The tract at residues 2513 to 2556 (QNYVPEQPFSGPASHHLNNPQKNDKPQETHESNEEISSCLIKDQ) is disordered. Residues 2534–2545 (KNDKPQETHESN) are compositionally biased toward basic and acidic residues. Ser-2549 is subject to Phosphoserine.

The protein belongs to the peptidase C19 family.

It catalyses the reaction Thiol-dependent hydrolysis of ester, thioester, amide, peptide and isopeptide bonds formed by the C-terminal Gly of ubiquitin (a 76-residue protein attached to proteins as an intracellular targeting signal).. It participates in protein modification; protein ubiquitination. Deubiquitinase that mediates deubiquitination of target proteins. May stabilize target proteins that are important for male germ cell development. This is Ubiquitin carboxyl-terminal hydrolase 9Y from Mus musculus (Mouse).